The sequence spans 597 residues: Phragmoplastin interacting protein 1 (597 aa).

The tract at residues 18–136 is disordered; the sequence is ESLSVSVSET…KTPKKAEEGN (119 aa). Polar residues predominate over residues 20–29; the sequence is LSVSVSETNP. The segment covering 30–40 has biased composition (low complexity); it reads QSQSLKLLLDS. Basic residues-rich tracts occupy residues 43-53 and 112-129; these read HKPRLSKREKR and QKKK…NKTP. Residues 112–119 carry the Nuclear localization signal motif; it reads QKKKNKKK. RRM domains lie at 161–238 and 262–338; these read NKLY…QYVK and NRVY…CALK. CCHC-type zinc fingers lie at residues 397–411, 481–495, and 576–591; these read CYEC…TACP and CYEC…ACPN.

As to quaternary structure, interacts with phragmoplastins (e.g. DRP1A, DRP1B, DRP1C, DRP1D and DRP1E) and with GTP-bound ARAC11/ROP1 as well as with Ran2 transcripts.

Its subcellular location is the nucleus. The protein localises to the cell membrane. It is found in the cytoplasm. The protein resides in the cytoskeleton. It localises to the phragmoplast. RNA-binding protein which mediates polarized mRNA (e.g. Ran2 transcripts mRNA) transport from the nucleus to the vicinity of the cell plate during cytokinesis and phragmoplast formation. This is Phragmoplastin interacting protein 1 from Arabidopsis thaliana (Mouse-ear cress).